A 346-amino-acid chain; its full sequence is Phosphate acyltransferase (346 aa).

This sequence belongs to the PlsX family. In terms of assembly, homodimer. Probably interacts with PlsY.

The protein resides in the cytoplasm. The catalysed reaction is a fatty acyl-[ACP] + phosphate = an acyl phosphate + holo-[ACP]. The protein operates within lipid metabolism; phospholipid metabolism. Catalyzes the reversible formation of acyl-phosphate (acyl-PO(4)) from acyl-[acyl-carrier-protein] (acyl-ACP). This enzyme utilizes acyl-ACP as fatty acyl donor, but not acyl-CoA. The protein is Phosphate acyltransferase of Deinococcus geothermalis (strain DSM 11300 / CIP 105573 / AG-3a).